We begin with the raw amino-acid sequence, 912 residues long: E3 ubiquitin-protein ligase HACE1 (912 aa).

7 ANK repeats span residues 23–55, 64–93, 97–126, 130–159, 163–192, 196–226, and 228–253; these read LPEDNETAVYTLMPMVMADQHRSVLELLSNSKF, VKRSLLHIAANCGSVECLVLLLKRGADPNY, SGCTPLHLAARNGQKKCMSKLLEYNADVNI, EGLTAIHWLAVNGRTELLHDLVQHVTNVDV, MGQTALHVACQNGHKTTVLCLLDSGADINR, SGATPLYFACSHGQRDTAQILLLRGAKYLPD, and NGVTPLDLCVQGGYGETCDILIQHHP. The HECT domain occupies 577 to 912; it reads NCEKLKQGIA…HCGSYGYTMA (336 aa). Cysteine 879 (glycyl thioester intermediate) is an active-site residue.

It localises to the golgi apparatus. Its subcellular location is the golgi stack membrane. The protein localises to the cytoplasm. The protein resides in the endoplasmic reticulum. The catalysed reaction is S-ubiquitinyl-[E2 ubiquitin-conjugating enzyme]-L-cysteine + [acceptor protein]-L-lysine = [E2 ubiquitin-conjugating enzyme]-L-cysteine + N(6)-ubiquitinyl-[acceptor protein]-L-lysine.. Its pathway is protein modification; protein ubiquitination. In terms of biological role, E3 ubiquitin-protein ligase involved in Golgi membrane fusion and regulation of small GTPases. Acts as a regulator of Golgi membrane dynamics during the cell cycle: recruited to Golgi membrane by Rab proteins and regulates postmitotic Golgi membrane fusion. Acts by mediating ubiquitination during mitotic Golgi disassembly, ubiquitination serving as a signal for Golgi reassembly later, after cell division. This chain is E3 ubiquitin-protein ligase HACE1 (hace1), found in Xenopus tropicalis (Western clawed frog).